Reading from the N-terminus, the 95-residue chain is Ferredoxin-like protein FixX (95 aa).

Belongs to the bacterial-type ferredoxin family. FixX subfamily.

Its function is as follows. Could be part of an electron transfer system required for anaerobic carnitine reduction. Could be a 3Fe-4S cluster-containing protein. The polypeptide is Ferredoxin-like protein FixX (fixX) (Salmonella typhimurium (strain LT2 / SGSC1412 / ATCC 700720)).